Consider the following 314-residue polypeptide: ATP synthase gamma chain (314 aa).

The protein belongs to the ATPase gamma chain family. As to quaternary structure, F-type ATPases have 2 components, CF(1) - the catalytic core - and CF(0) - the membrane proton channel. CF(1) has five subunits: alpha(3), beta(3), gamma(1), delta(1), epsilon(1). CF(0) has three main subunits: a, b and c.

The protein resides in the cellular thylakoid membrane. Produces ATP from ADP in the presence of a proton gradient across the membrane. The gamma chain is believed to be important in regulating ATPase activity and the flow of protons through the CF(0) complex. This Picosynechococcus sp. (strain ATCC 27264 / PCC 7002 / PR-6) (Agmenellum quadruplicatum) protein is ATP synthase gamma chain.